Consider the following 515-residue polypeptide: Interferon-induced, double-stranded RNA-activated protein kinase (515 aa).

An N-acetylalanine modification is found at A2. Residues F8–N76 enclose the DRBM 1 domain. K68 participates in a covalent cross-link: Glycyl lysine isopeptide (Lys-Gly) (interchain with G-Cter in ISG15). T84 is modified (phosphothreonine). In terms of domain architecture, DRBM 2 spans N95–K162. Y96 is modified (phosphotyrosine; by autocatalysis). K154 participates in a covalent cross-link: Glycyl lysine isopeptide (Lys-Gly) (interchain with G-Cter in ISG15). Position 157 is a phosphotyrosine; by autocatalysis (Y157). Residues E204–P224 are disordered. Phosphothreonine is present on T233. Positions D241–C515 are interaction with TRAF5. A Protein kinase domain is found at F242–R504. Residue I248 to V256 coordinates ATP. Y268 carries the post-translational modification Phosphotyrosine; by autocatalysis. K271 lines the ATP pocket. Residue D376 is the Proton acceptor of the active site. Residues T409 and T414 each carry the phosphothreonine; by autocatalysis modification. At S419 the chain carries Phosphoserine.

Belongs to the protein kinase superfamily. Ser/Thr protein kinase family. GCN2 subfamily. Homodimer. Interacts with DNAJC3 and STRBP. Forms a complex with FANCA, FANCC, FANCG and HSP70. Interacts with ADAR/ADAR1. The inactive form interacts with NCK1. Interacts (via the kinase catalytic domain) with STAT3 (via SH2 domain), TRAF2 (C-terminus), TRAF5 (C-terminus) and TRAF6 (C-terminus). Interacts with MAP2K6, TARBP2, NLRP1, NLRC4 and AIM2. Interacts (via DRBM 1 domain) with DUS2L (via DRBM domain). Interacts with DHX9 (via N-terminus) and this interaction is dependent upon activation of the kinase. The inactive form interacts with GSN. Interacts with IKBKB/IKKB, NPM1, NLRP3 and IRS1. Autophosphorylated on several Ser, Thr and Tyr residues. Autophosphorylation of Thr-414 is dependent on Thr-409 and is stimulated by dsRNA binding and dimerization. Autophosphorylation apparently leads to the activation of the kinase. Tyrosine autophosphorylation is essential for efficient dsRNA-binding, dimerization, and kinase activation. As to expression, expressed in heart, lung, brain, kidney, testes, thymus and bone marrow.

The protein resides in the cytoplasm. It localises to the nucleus. The protein localises to the perinuclear region. It carries out the reaction L-seryl-[protein] + ATP = O-phospho-L-seryl-[protein] + ADP + H(+). It catalyses the reaction L-threonyl-[protein] + ATP = O-phospho-L-threonyl-[protein] + ADP + H(+). The enzyme catalyses L-tyrosyl-[protein] + ATP = O-phospho-L-tyrosyl-[protein] + ADP + H(+). Initially produced in an inactive form and is activated by binding to viral dsRNA, which causes dimerization and autophosphorylation in the activation loop and stimulation of function. ISGylation can activate it in the absence of viral infection. Can also be activated by heparin, pro-inflammatory stimuli, growth factors, cytokines, oxidative stress and the cellular protein PRKRA. Activity is markedly stimulated by manganese ions. Activation is blocked by the cellular proteins TARBP2, DUS2L, NPM1, NCK1 and ADAR. Its function is as follows. IFN-induced dsRNA-dependent serine/threonine-protein kinase that phosphorylates the alpha subunit of eukaryotic translation initiation factor 2 (EIF2S1/eIF-2-alpha) and plays a key role in the innate immune response to viral infection. Inhibits viral replication via the integrated stress response (ISR): EIF2S1/eIF-2-alpha phosphorylation in response to viral infection converts EIF2S1/eIF-2-alpha in a global protein synthesis inhibitor, resulting to a shutdown of cellular and viral protein synthesis, while concomitantly initiating the preferential translation of ISR-specific mRNAs, such as the transcriptional activator ATF4. Exerts its antiviral activity on a wide range of DNA and RNA viruses including west nile virus (WNV), sindbis virus (SV), foot-and-mouth virus (FMDV), semliki Forest virus (SFV) and lymphocytic choriomeningitis virus (LCMV). Also involved in the regulation of signal transduction, apoptosis, cell proliferation and differentiation: phosphorylates other substrates including p53/TP53, PPP2R5A, DHX9, ILF3, and IRS1. In addition to serine/threonine-protein kinase activity, also has tyrosine-protein kinase activity and phosphorylates CDK1 at 'Tyr-4' upon DNA damage, facilitating its ubiquitination and proteasomal degradation. Either as an adapter protein and/or via its kinase activity, can regulate various signaling pathways (p38 MAP kinase, NF-kappa-B and insulin signaling pathways) and transcription factors (JUN, STAT1, STAT3, IRF1, ATF3) involved in the expression of genes encoding pro-inflammatory cytokines and IFNs. Activates the NF-kappa-B pathway via interaction with IKBKB and TRAF family of proteins and activates the p38 MAP kinase pathway via interaction with MAP2K6. Can act as both a positive and negative regulator of the insulin signaling pathway (ISP). Negatively regulates ISP by inducing the inhibitory phosphorylation of insulin receptor substrate 1 (IRS1) at 'Ser-312' and positively regulates ISP via phosphorylation of PPP2R5A which activates FOXO1, which in turn up-regulates the expression of insulin receptor substrate 2 (IRS2). Can regulate NLRP3 inflammasome assembly and the activation of NLRP3, NLRP1, AIM2 and NLRC4 inflammasomes. Plays a role in the regulation of the cytoskeleton by binding to gelsolin (GSN), sequestering the protein in an inactive conformation away from actin. The sequence is that of Interferon-induced, double-stranded RNA-activated protein kinase (Eif2ak2) from Mus musculus (Mouse).